We begin with the raw amino-acid sequence, 282 residues long: Bis(5'-nucleosyl)-tetraphosphatase, symmetrical (282 aa).

It belongs to the Ap4A hydrolase family.

It catalyses the reaction P(1),P(4)-bis(5'-adenosyl) tetraphosphate + H2O = 2 ADP + 2 H(+). Functionally, hydrolyzes diadenosine 5',5'''-P1,P4-tetraphosphate to yield ADP. In Enterobacter sp. (strain 638), this protein is Bis(5'-nucleosyl)-tetraphosphatase, symmetrical.